The primary structure comprises 122 residues: Large ribosomal subunit protein uL14 (122 aa).

It belongs to the universal ribosomal protein uL14 family. In terms of assembly, part of the 50S ribosomal subunit. Forms a cluster with proteins L3 and L19. In the 70S ribosome, L14 and L19 interact and together make contacts with the 16S rRNA in bridges B5 and B8.

Its function is as follows. Binds to 23S rRNA. Forms part of two intersubunit bridges in the 70S ribosome. The protein is Large ribosomal subunit protein uL14 of Caulobacter sp. (strain K31).